A 354-amino-acid polypeptide reads, in one-letter code: Ornithine transcarbamylase, mitochondrial (354 aa).

Residues 1-32 (MLSNLRILLNKAALRKAHTSMVRNFRYGKPVQ) constitute a mitochondrion transit peptide. Position 70 is an N6-acetyllysine; alternate (lysine 70). The residue at position 70 (lysine 70) is an N6-succinyllysine; alternate. N6-succinyllysine is present on lysine 80. At lysine 88 the chain carries N6-acetyllysine; alternate. The residue at position 88 (lysine 88) is an N6-succinyllysine; alternate. Residue 90–93 (STRT) coordinates carbamoyl phosphate. Serine 133 carries the phosphoserine modification. Arginine 141 contacts carbamoyl phosphate. Position 144 is an N6-acetyllysine; alternate (lysine 144). Lysine 144 is subject to N6-succinyllysine; alternate. Residues histidine 168 and glutamine 171 each coordinate carbamoyl phosphate. An L-ornithine-binding site is contributed by asparagine 199. N6-acetyllysine; alternate occurs at positions 221, 231, and 238. N6-succinyllysine; alternate occurs at positions 221, 231, and 238. Aspartate 263, serine 267, and methionine 268 together coordinate L-ornithine. Residues lysine 274 and lysine 289 each carry the N6-succinyllysine modification. Residue lysine 292 is modified to N6-acetyllysine; alternate. N6-succinyllysine; alternate is present on lysine 292. The active-site Proton acceptor is the cysteine 303. Carbamoyl phosphate is bound at residue 303–304 (CL). The residue at position 307 (lysine 307) is an N6-acetyllysine; alternate. An N6-succinyllysine; alternate modification is found at lysine 307. Arginine 330 is a binding site for carbamoyl phosphate.

The protein belongs to the aspartate/ornithine carbamoyltransferase superfamily. OTCase family. Homotrimer. Post-translationally, acetylation at Lys-88 negatively regulates ornithine carbamoyltransferase activity in response to nutrient signals.

The protein localises to the mitochondrion matrix. The catalysed reaction is carbamoyl phosphate + L-ornithine = L-citrulline + phosphate + H(+). It functions in the pathway nitrogen metabolism; urea cycle; L-citrulline from L-ornithine and carbamoyl phosphate: step 1/1. Its activity is regulated as follows. Negatively regulated by lysine acetylation. Functionally, catalyzes the second step of the urea cycle, the condensation of carbamoyl phosphate with L-ornithine to form L-citrulline. The urea cycle ensures the detoxification of ammonia by converting it to urea for excretion. The protein is Ornithine transcarbamylase, mitochondrial of Rattus norvegicus (Rat).